The sequence spans 81 residues: Sulfur carrier protein TusA (81 aa).

C19 functions as the Cysteine persulfide intermediate in the catalytic mechanism.

This sequence belongs to the sulfur carrier protein TusA family. Interacts with IscS.

The protein resides in the cytoplasm. The protein operates within tRNA modification. Functionally, sulfur carrier protein involved in sulfur trafficking in the cell. Part of a sulfur-relay system required for 2-thiolation during synthesis of 2-thiouridine of the modified wobble base 5-methylaminomethyl-2-thiouridine (mnm(5)s(2)U) in tRNA. Interacts with IscS and stimulates its cysteine desulfurase activity. Accepts an activated sulfur from IscS, which is then transferred to TusD, and thus determines the direction of sulfur flow from IscS to 2-thiouridine formation. Also appears to be involved in sulfur transfer for the biosynthesis of molybdopterin. This is Sulfur carrier protein TusA from Escherichia coli (strain SMS-3-5 / SECEC).